Reading from the N-terminus, the 451-residue chain is Multidrug export protein MepA (451 aa).

12 consecutive transmembrane segments (helical) span residues 26 to 46 (MIGT…IGFL), 52 to 72 (ISAI…GNLF), 97 to 117 (SFSI…ALPF), 139 to 159 (LKVM…EQFA), 170 to 190 (IGML…IFGF), 194 to 214 (VVGA…FFII), 245 to 265 (IPAF…NLFL), 282 to 302 (LVQF…PLIA), 318 to 338 (AVIM…FTIG), 355 to 375 (ATFI…GFLF), 390 to 410 (IMAI…NALF), and 417 to 437 (WSLL…VYLL).

The protein belongs to the multi antimicrobial extrusion (MATE) (TC 2.A.66.1) family. MepA subfamily.

The protein resides in the cell membrane. Functionally, multidrug resistance efflux protein. In Staphylococcus aureus (strain bovine RF122 / ET3-1), this protein is Multidrug export protein MepA (mepA).